The primary structure comprises 204 residues: Protein XpaC (204 aa).

Functionally, in double copy it causes aberrant cell morphology, filamentation and inhibits sporulation. Hydrolyzes 5-bromo-4-chloroindolyl phosphate. The polypeptide is Protein XpaC (xpaC) (Bacillus subtilis (strain 168)).